We begin with the raw amino-acid sequence, 73 residues long: MQIKHLITLFFLVLIVADQCSAFFSLIPSLIGGLVSAIKGRKKREISTQIDQYRNLQKREAELEELLDRLPMY.

The N-terminal stretch at 1–22 is a signal peptide; it reads MQIKHLITLFFLVLIVADQCSA. Positions 45 to 73 are excised as a propeptide; it reads EISTQIDQYRNLQKREAELEELLDRLPMY.

Belongs to the non-disulfide-bridged peptide (NDBP) superfamily. Short antimicrobial peptide (group 4) family. In terms of tissue distribution, expressed by the venom gland.

Its subcellular location is the secreted. In terms of biological role, antibacterial peptide. This Tityus costatus (Brazilian scorpion) protein is Antimicrobial peptide 6.